A 50-amino-acid polypeptide reads, in one-letter code: Insulin 2 (50 aa).

3 disulfides stabilise this stretch: C8–C36, C20–C49, and C35–C40.

It belongs to the insulin family. As to quaternary structure, heterodimer of a B chain and an A chain linked by two disulfide bonds.

Its subcellular location is the secreted. Insulin decreases blood glucose concentration. It increases cell permeability to monosaccharides, amino acids and fatty acids. It accelerates glycolysis, the pentose phosphate cycle, and glycogen synthesis in liver. This is Insulin 2 (ins2) from Batrachoididae sp. (Toadfish).